The sequence spans 588 residues: Nucleoporin ndc-1 (588 aa).

The segment covering 1–12 (MMGDSHSSFTTT) has biased composition (polar residues). Positions 1 to 55 (MMGDSHSSFTTTTDEHLYNQFSPGRRKNDFPAASSSSSSPNLRRSPNRTVSSPRV) are disordered. Topologically, residues 1 to 79 (MMGDSHSSFT…FQAEISVRKR (79 aa)) are cytoplasmic. Residues 31–48 (PAASSSSSSPNLRRSPNR) show a composition bias toward low complexity. The helical transmembrane segment at 80–100 (LAGAACGYLSTIFFIVTVSIL) threads the bilayer. Over 101 to 122 (KLTIWAPFSSVQDSLAWWIYPN) the chain is Perinuclear space. The helical transmembrane segment at 123–143 (AWASIIFVGIASVAMSLFSII) threads the bilayer. Over 144–159 (KFCKVDQLPRLAATDT) the chain is Cytoplasmic. A helical transmembrane segment spans residues 160–180 (FALAGVALEFVTRLTFVYTAF). The Perinuclear space segment spans residues 181–190 (CVADFSFSRE). Residues 191 to 211 (FAFVAISLAIAISSALVVFRS) traverse the membrane as a helical segment. At 212–255 (DYQLNFSHIQVNSVKTLIDFGTSLPYANISEICGIDAAISYTAA) the chain is on the cytoplasmic side. The helical transmembrane segment at 256 to 276 (VALILVVGPMVSGFSAWWLLL) threads the bilayer. Residue Asn-277 is a topological domain, perinuclear space. The helical transmembrane segment at 278–298 (IPFHVVLFGLCFTQQFYSKIS) threads the bilayer. Over 299-588 (MKIVNQIVMK…IRMICLTDEL (290 aa)) the chain is Cytoplasmic.

This sequence belongs to the NDC1 family.

The protein localises to the nucleus. The protein resides in the nuclear pore complex. Its subcellular location is the nucleus membrane. Functionally, component of the nuclear pore complex (NPC), which plays a key role in de novo assembly and insertion of NPC in the nuclear envelope. Plays a role in postmitotic nuclear pore complex assembly potentially by promoting localization of nuclear pore complex proteins to the nuclear rim. This Caenorhabditis elegans protein is Nucleoporin ndc-1.